The sequence spans 1035 residues: FERM domain-containing protein 4B (1035 aa).

The FERM domain maps to 59 to 361 (RHCQVHLLDD…SQHQFYLDRK (303 aa)). Ser-372 carries the phosphoserine modification. Coiled coils occupy residues 414 to 451 (QDSE…LKKI) and 535 to 559 (KQDY…RIRC). The interval 542 to 972 (VKRLQEIENS…TQLTIGLSEY (431 aa)) is necessary for adherens junction and tight junction localization. Disordered stretches follow at residues 563–615 (PSQK…ILPP), 631–699 (NEQF…LESQ), 713–738 (FTLS…SQSS), and 754–798 (TQTL…SKGQ). Positions 571–590 (PPEDIIPSESSSLSDTTTYD) are enriched in low complexity. Residues 594–607 (DSFTLAGQRPSSVP) show a composition bias toward polar residues. A Phosphoserine modification is found at Ser-609. Positions 635–644 (MDTRHSREML) are enriched in basic and acidic residues. 2 stretches are compositionally biased toward polar residues: residues 664–699 (MPTT…LESQ) and 715–725 (LSKSQRSSSTE). At Ser-698 the chain carries Phosphoserine. The span at 762-771 (RGRRRSKKHS) shows a compositional bias: basic residues. Residues 772–782 (VSTSNSGSMPN) show a composition bias toward polar residues. Lys-883 participates in a covalent cross-link: Glycyl lysine isopeptide (Lys-Gly) (interchain with G-Cter in SUMO2). 3 disordered regions span residues 906-926 (RASG…SDRG), 939-958 (PCSP…TNAS), and 994-1035 (PSRQ…GTLV). Positions 907-921 (ASGQKDQGHSPQTSF) are enriched in polar residues. Residue Ser-916 is modified to Phosphoserine. The span at 941-958 (SPSSRASSYSSVSSTNAS) shows a compositional bias: low complexity. The span at 1019–1035 (SEQRLFWHEDSKPGTLV) shows a compositional bias: basic and acidic residues. Lys-1030 participates in a covalent cross-link: Glycyl lysine isopeptide (Lys-Gly) (interchain with G-Cter in SUMO2).

As to quaternary structure, interacts with CYTH3. Interacts with PARD3. Interacts with CYTH1. Isoform 1 is expressed in the brain. Isoform 2 is expressed in the lung (at protein level).

Its subcellular location is the cytoplasm. The protein resides in the cytoskeleton. It is found in the cell junction. The protein localises to the tight junction. It localises to the adherens junction. Member of GRP1 signaling complexes that are acutely recruited to plasma membrane ruffles in response to insulin receptor signaling. May function as a scaffolding protein that regulates epithelial cell polarity by connecting ARF6 activation with the PAR3 complex. Plays a redundant role with FRMD4A in epithelial polarization. The polypeptide is FERM domain-containing protein 4B (Frmd4b) (Mus musculus (Mouse)).